A 348-amino-acid polypeptide reads, in one-letter code: 2-heptyl-4(1H)-quinolone synthase subunit PqsC (348 aa).

The active-site Acyl-thioester intermediate is the C129. The active site involves H269.

Belongs to the thiolase-like superfamily. FabH family. Forms a tight complex with PqsB.

The protein resides in the cytoplasm. The catalysed reaction is (2-aminobenzoyl)acetate + octanoyl-CoA + H(+) = 2-heptyl-4(1H)-quinolone + CO2 + CoA + H2O. Folding of PqsC and binding of octanoate are promoted by PqsB. Binding of the octanoyl group probably increases the binding affinity of the complex for 2-ABA. Activity of the complex is inhibited by 2-aminoacetophenone (2-AA). Its function is as follows. Required for the biosynthesis of the quorum-sensing signaling molecules 2-heptyl-4(1H)-quinolone (HHQ) and 2-heptyl-3-hydroxy-4(1H)-quinolone (Pseudomonas quinolone signal or PQS), which are important for biofilm formation and virulence. The PqsC/PqsB complex catalyzes the condensation of 2-aminobenzoylacetate (2-ABA) and octanoyl-CoA to form HHQ. First, PqsC acquires an octanoyl group from octanoyl-CoA and forms an octanoyl-PqsC intermediate. Then, together with PqsB, it catalyzes the coupling of 2-ABA with the octanoate group, leading to decarboxylation and dehydration, and resulting in closure of the quinoline ring. The sequence is that of 2-heptyl-4(1H)-quinolone synthase subunit PqsC from Pseudomonas aeruginosa (strain ATCC 15692 / DSM 22644 / CIP 104116 / JCM 14847 / LMG 12228 / 1C / PRS 101 / PAO1).